A 308-amino-acid chain; its full sequence is MLLLQSILITKIMVIQLILFFEYALASGFEDKNILKEGKMMFDTLLKQFLEIDKVISLLYKDFVDNYIDFKNLEIVKIKKENEIENKLKSLLKSENIDYALVVAPEDEDILYNLTKIIESYPVKNLGCSSEAIKIAGNKYLTYLAIKDAVKTPKTFPPKKYVVKKIDSCGGKFNLFDENFLIQEFIDGENLSVSLIVGKKIHPLSLNRQYIDKRGFVGGEVNINHKLKDKIFNEAIKAVKCINGLNGYVGVDVIVNNDGIYIIEINPRITTTIYGLKTNPSLAELLIKNANNEELKFKVKGEKFTIDK.

Residues 89-291 (KSLLKSENID…LAELLIKNAN (203 aa)) enclose the ATP-grasp domain. 115-192 (TKIIESYPVK…QEFIDGENLS (78 aa)) serves as a coordination point for ATP. Residues Asp252, Glu264, and Asn266 each contribute to the Mg(2+) site. 3 residues coordinate Mn(2+): Asp252, Glu264, and Asn266.

The cofactor is Mg(2+). Mn(2+) is required as a cofactor.

The enzyme catalyses tyramine + L-glutamate + ATP = gamma-L-glutamyltyramine + ADP + phosphate + H(+). The protein operates within cofactor biosynthesis; methanofuran biosynthesis. Functionally, catalyzes the formation of an amide bond between tyramine and the gamma carboxy group of L-glutamate. The enzyme also accepts phenylethylamine in vitro. The sequence is that of Tyramine--L-glutamate ligase (mfnD) from Methanocaldococcus jannaschii (strain ATCC 43067 / DSM 2661 / JAL-1 / JCM 10045 / NBRC 100440) (Methanococcus jannaschii).